We begin with the raw amino-acid sequence, 380 residues long: Cytochrome b (380 aa).

Helical transmembrane passes span 34-54, 78-99, 114-134, and 179-199; these read FGSL…LLAM, WLIR…FLHI, WNTG…GYVL, and FFAL…IHLT. 2 residues coordinate heme b: histidine 84 and histidine 98. Heme b contacts are provided by histidine 183 and histidine 197. Histidine 202 is an a ubiquinone binding site. The next 4 membrane-spanning stretches (helical) occupy residues 227-247, 289-309, 321-341, and 348-368; these read IKDI…ALFS, LGGV…PFLH, LSQT…WIGS, and FIII…ILFP.

Belongs to the cytochrome b family. The cytochrome bc1 complex contains 11 subunits: 3 respiratory subunits (MT-CYB, CYC1 and UQCRFS1), 2 core proteins (UQCRC1 and UQCRC2) and 6 low-molecular weight proteins (UQCRH/QCR6, UQCRB/QCR7, UQCRQ/QCR8, UQCR10/QCR9, UQCR11/QCR10 and a cleavage product of UQCRFS1). This cytochrome bc1 complex then forms a dimer. It depends on heme b as a cofactor.

The protein localises to the mitochondrion inner membrane. In terms of biological role, component of the ubiquinol-cytochrome c reductase complex (complex III or cytochrome b-c1 complex) that is part of the mitochondrial respiratory chain. The b-c1 complex mediates electron transfer from ubiquinol to cytochrome c. Contributes to the generation of a proton gradient across the mitochondrial membrane that is then used for ATP synthesis. This is Cytochrome b (MT-CYB) from Alectoris rufa (Red-legged partridge).